Consider the following 451-residue polypeptide: uncharacterized protein (451 aa).

In terms of domain architecture, TRAM spans 2–60; that stretch reads VVKVKQKIPLKIKRMGINGEGIGFYQKTLVFVPGALKGENIFCQITAVKRNFAEAKLLT. 4 residues coordinate [4Fe-4S] cluster: cysteine 73, cysteine 79, cysteine 82, and cysteine 162. S-adenosyl-L-methionine-binding residues include glutamine 283, tyrosine 312, aspartate 333, and aspartate 381. Cysteine 408 acts as the Nucleophile in catalysis.

It belongs to the class I-like SAM-binding methyltransferase superfamily. RNA M5U methyltransferase family.

This is an uncharacterized protein from Streptococcus pyogenes serotype M3 (strain ATCC BAA-595 / MGAS315).